A 465-amino-acid polypeptide reads, in one-letter code: L-cystine uptake protein TcyP (465 aa).

A run of 10 helical transmembrane segments spans residues 3 to 23 (LFLTLLIIAIVLAVAGLLFYM), 34 to 54 (VLLALGAGVVYGLLLQFFFAP), 73 to 93 (YVRFLQMIVMPLIFISILSAF), 105 to 125 (ISALILGTLIATTAIAAAIGI), 184 to 204 (PTSAIGVVIFSAFLGVAYLGV), 224 to 246 (AIIMRVVTLILRLTPYGVLAIMT), 263 to 283 (FVLASYAALIVMFVIHLIILA), 338 to 358 (LSIGQNGCAGIYPAMLAVMIA), 370 to 390 (FILLLIVVIAISSFGVAGVGG), and 394 to 414 (FAAILVLSALDFPIALAGLLI).

This sequence belongs to the dicarboxylate/amino acid:cation symporter (DAACS) (TC 2.A.23) family.

The protein resides in the membrane. Its function is as follows. Mediates uptake of L-cystine, the oxidized form of L-cysteine. The polypeptide is L-cystine uptake protein TcyP (Shouchella clausii (strain KSM-K16) (Alkalihalobacillus clausii)).